The primary structure comprises 198 residues: A-type ATP synthase subunit E (198 aa).

It belongs to the V-ATPase E subunit family. As to quaternary structure, has multiple subunits with at least A(3), B(3), C, D, E, F, H, I and proteolipid K(x).

Its subcellular location is the cell membrane. Functionally, component of the A-type ATP synthase that produces ATP from ADP in the presence of a proton gradient across the membrane. This Pyrococcus furiosus (strain ATCC 43587 / DSM 3638 / JCM 8422 / Vc1) protein is A-type ATP synthase subunit E.